A 370-amino-acid polypeptide reads, in one-letter code: GDSL esterase/lipase At1g09390 (370 aa).

Residues 1–27 (MATLSLHSHSFLLVLLPFILILRQNLA) form the signal peptide. Ser44 acts as the Nucleophile in catalysis. Residues Asn90 and Asn315 are each glycosylated (N-linked (GlcNAc...) asparagine). Active-site residues include Asp336 and His339.

It belongs to the 'GDSL' lipolytic enzyme family.

The protein resides in the secreted. The sequence is that of GDSL esterase/lipase At1g09390 from Arabidopsis thaliana (Mouse-ear cress).